The primary structure comprises 422 residues: UDP-N-acetylglucosamine 1-carboxyvinyltransferase (422 aa).

22–23 (KN) contributes to the phosphoenolpyruvate binding site. R94 is a binding site for UDP-N-acetyl-alpha-D-glucosamine. C118 serves as the catalytic Proton donor. The residue at position 118 (C118) is a 2-(S-cysteinyl)pyruvic acid O-phosphothioketal. Residues 123-127 (RPIDL), D309, and L331 contribute to the UDP-N-acetyl-alpha-D-glucosamine site.

The protein belongs to the EPSP synthase family. MurA subfamily.

It localises to the cytoplasm. It carries out the reaction phosphoenolpyruvate + UDP-N-acetyl-alpha-D-glucosamine = UDP-N-acetyl-3-O-(1-carboxyvinyl)-alpha-D-glucosamine + phosphate. The protein operates within cell wall biogenesis; peptidoglycan biosynthesis. Functionally, cell wall formation. Adds enolpyruvyl to UDP-N-acetylglucosamine. In Sulfurimonas denitrificans (strain ATCC 33889 / DSM 1251) (Thiomicrospira denitrificans (strain ATCC 33889 / DSM 1251)), this protein is UDP-N-acetylglucosamine 1-carboxyvinyltransferase.